Consider the following 183-residue polypeptide: dCTP deaminase, dUMP-forming (183 aa).

DCTP contacts are provided by residues 99–104, Asp117, 125–127, Gln146, Tyr159, Lys166, and Gln170; these read KSSIAR and TLE. The active-site Proton donor/acceptor is the Glu127.

This sequence belongs to the dCTP deaminase family. In terms of assembly, homotrimer.

The enzyme catalyses dCTP + 2 H2O = dUMP + NH4(+) + diphosphate. It participates in pyrimidine metabolism; dUMP biosynthesis; dUMP from dCTP: step 1/1. Bifunctional enzyme that catalyzes both the deamination of dCTP to dUTP and the hydrolysis of dUTP to dUMP without releasing the toxic dUTP intermediate. The protein is dCTP deaminase, dUMP-forming of Methanoregula boonei (strain DSM 21154 / JCM 14090 / 6A8).